Here is a 475-residue protein sequence, read N- to C-terminus: Na(+)/H(+) antiporter NhaA 2 (475 aa).

The next 12 helical transmembrane spans lie at 44 to 64, 92 to 112, 130 to 150, 156 to 176, 186 to 206, 211 to 231, 232 to 252, 255 to 275, 331 to 351, 368 to 388, 406 to 426, and 442 to 462; these read AQAT…WWAN, LKHI…GLEI, LILC…LFNW, IGWG…LTLV, AFLV…IALF, ISVI…IANY, AGVL…WTML, GVHP…RPML, ALDL…NAGV, LGIV…ACWL, VIGM…IATL, and ILFA…IIAA.

The protein belongs to the NhaA Na(+)/H(+) (TC 2.A.33) antiporter family.

Its subcellular location is the cell inner membrane. The enzyme catalyses Na(+)(in) + 2 H(+)(out) = Na(+)(out) + 2 H(+)(in). Its function is as follows. Na(+)/H(+) antiporter that extrudes sodium in exchange for external protons. The protein is Na(+)/H(+) antiporter NhaA 2 of Psychromonas ingrahamii (strain DSM 17664 / CCUG 51855 / 37).